Here is an 821-residue protein sequence, read N- to C-terminus: Leucine--tRNA ligase (821 aa).

The 'HIGH' region signature appears at 40-50 (PYPSGRIHMGH). The 'KMSKS' region signature appears at 586–590 (KMSKS). Lysine 589 provides a ligand contact to ATP.

This sequence belongs to the class-I aminoacyl-tRNA synthetase family.

Its subcellular location is the cytoplasm. It catalyses the reaction tRNA(Leu) + L-leucine + ATP = L-leucyl-tRNA(Leu) + AMP + diphosphate. The sequence is that of Leucine--tRNA ligase from Aliarcobacter butzleri (strain RM4018) (Arcobacter butzleri).